The sequence spans 571 residues: Potassium-transporting ATPase potassium-binding subunit (571 aa).

12 helical membrane passes run 5 to 25 (GWMQ…PLGG), 64 to 84 (LAYA…LYAL), 136 to 156 (GLTH…VALI), 179 to 199 (LYVL…QGMP), 220 to 240 (VGPV…GGFF), 254 to 274 (LSNF…TNVF), 285 to 305 (WAIL…TYWA), 330 to 350 (FGIA…CGAV), 375 to 395 (IIGG…VAIF), 421 to 441 (MLGI…ATVV), 488 to 508 (LAIG…AIAG), and 527 to 547 (GGLF…LTFF).

This sequence belongs to the KdpA family. The system is composed of three essential subunits: KdpA, KdpB and KdpC.

It localises to the cell inner membrane. In terms of biological role, part of the high-affinity ATP-driven potassium transport (or Kdp) system, which catalyzes the hydrolysis of ATP coupled with the electrogenic transport of potassium into the cytoplasm. This subunit binds the periplasmic potassium ions and delivers the ions to the membrane domain of KdpB through an intramembrane tunnel. This is Potassium-transporting ATPase potassium-binding subunit from Methylorubrum extorquens (strain PA1) (Methylobacterium extorquens).